Here is a 307-residue protein sequence, read N- to C-terminus: D-alanine--D-alanine ligase (307 aa).

The ATP-grasp domain maps to 104 to 301 (RTAFLAAGLP…FVSLCRWMVE (198 aa)). 130–183 (PLPRPFVIKPANEGSAVGVHILHEGDNRRTEIARSWSFGGQALVEEYIPGRELT) provides a ligand contact to ATP. Mg(2+) contacts are provided by Asp-251, Glu-268, and Asn-270.

Belongs to the D-alanine--D-alanine ligase family. Requires Mg(2+) as cofactor. Mn(2+) is required as a cofactor.

The protein localises to the cytoplasm. It carries out the reaction 2 D-alanine + ATP = D-alanyl-D-alanine + ADP + phosphate + H(+). It participates in cell wall biogenesis; peptidoglycan biosynthesis. In terms of biological role, cell wall formation. The polypeptide is D-alanine--D-alanine ligase (Granulibacter bethesdensis (strain ATCC BAA-1260 / CGDNIH1)).